Here is a 190-residue protein sequence, read N- to C-terminus: Protein GrpE (190 aa).

The segment covering 1-26 (MADKEKDAVIVDETEHVDVDSKESKK) has biased composition (basic and acidic residues). The tract at residues 1–31 (MADKEKDAVIVDETEHVDVDSKESKKEKKTK) is disordered.

The protein belongs to the GrpE family. As to quaternary structure, homodimer.

Its subcellular location is the cytoplasm. In terms of biological role, participates actively in the response to hyperosmotic and heat shock by preventing the aggregation of stress-denatured proteins, in association with DnaK and GrpE. It is the nucleotide exchange factor for DnaK and may function as a thermosensor. Unfolded proteins bind initially to DnaJ; upon interaction with the DnaJ-bound protein, DnaK hydrolyzes its bound ATP, resulting in the formation of a stable complex. GrpE releases ADP from DnaK; ATP binding to DnaK triggers the release of the substrate protein, thus completing the reaction cycle. Several rounds of ATP-dependent interactions between DnaJ, DnaK and GrpE are required for fully efficient folding. In Acholeplasma laidlawii (strain PG-8A), this protein is Protein GrpE.